Here is a 549-residue protein sequence, read N- to C-terminus: Exodeoxyribonuclease 7 large subunit (549 aa).

The disordered stretch occupies residues 511–549 (LVATDPPVDPKPTRKPVQKSSSPKPSSRKPKKSQQEDLF).

This sequence belongs to the XseA family. In terms of assembly, heterooligomer composed of large and small subunits.

The protein resides in the cytoplasm. It carries out the reaction Exonucleolytic cleavage in either 5'- to 3'- or 3'- to 5'-direction to yield nucleoside 5'-phosphates.. Bidirectionally degrades single-stranded DNA into large acid-insoluble oligonucleotides, which are then degraded further into small acid-soluble oligonucleotides. The polypeptide is Exodeoxyribonuclease 7 large subunit (Beijerinckia indica subsp. indica (strain ATCC 9039 / DSM 1715 / NCIMB 8712)).